Consider the following 654-residue polypeptide: Amyloid beta precursor like protein 1 (654 aa).

A signal peptide spans 1 to 38 (MGPTSPAARGQGRRWRPPPLPLLLPLSLLLLRAQLAVG). Over 39-584 (NLAVGSPSAA…APSGTGVSRE (546 aa)) the chain is Extracellular. The GFLD subdomain stretch occupies residues 50–146 (APGSAQVAGL…PFHCLPGEFV (97 aa)). Residues 50–212 (APGSAQVAGL…RGVEYVCCPP (163 aa)) enclose the E1 domain. 6 disulfides stabilise this stretch: cysteine 60/cysteine 84, cysteine 95/cysteine 140, cysteine 120/cysteine 128, cysteine 156/cysteine 210, cysteine 167/cysteine 197, and cysteine 181/cysteine 209. A cuBD subdomain region spans residues 154–212 (EGCRFLHQERMDQCESSTRRHQEAQEACSSQGLILHGSGMLLPCGSDRFRGVEYVCCPP). Histidine 174 is a Cu(2+) binding site. 3 residues coordinate Zn(2+): glutamate 206, cysteine 209, and cysteine 210. Positions 214–297 (ATPNPSGMAA…VTPTPRPTDG (84 aa)) are disordered. Positions 262 to 272 (QAEEEEEEEEE) are enriched in acidic residues. The E2 domain occupies 297-488 (GVDVYFGMPG…QELRPQIQEL (192 aa)). Heparin-binding stretches follow at residues 314–346 (FLRA…SKNL) and 414–445 (LMAL…DPEK). Residues 446-463 (AQQMRFQVQTHLQVIEER) are collagen-binding. Asparagine 465 is a glycosylation site (N-linked (GlcNAc...) asparagine). A disordered region spans residues 497–580 (SELDASVPGS…RDELAPSGTG (84 aa)). Residues 508–523 (SEDKGSLQPPESKDDP) are compositionally biased toward basic and acidic residues. Residues 529 to 539 (KGSTDQESSSS) show a composition bias toward polar residues. Asparagine 555 carries N-linked (GlcNAc...) asparagine glycosylation. Histidine 565 contributes to the Cu(2+) binding site. Histidine 565 lines the Zn(2+) pocket. Residues 585 to 607 (ALSGLLIMGAGGGSLIVLSLLLL) form a helical membrane-spanning segment. A Basolateral sorting signal motif is present at residues 608-619 (RKKKPYGTISHG). The Cytoplasmic segment spans residues 608-654 (RKKKPYGTISHGVVEVDPMLTLEEQQLRELQRHGYENPTYRFLEERP). Positions 636–652 (ELQRHGYENPTYRFLEE) are interaction with DAB1. The interaction with DAB2 stretch occupies residues 640 to 654 (HGYENPTYRFLEERP). Positions 644 to 647 (NPTY) match the NPXY motif; contains endocytosis signal motif.

This sequence belongs to the APP family. As to quaternary structure, monomer and homodimer. Heparin binding promotes homodimerization. Binds, via its C-terminus, to the PID domain of several cytoplasmic proteins, including APBB and APBA family members, MAPK8IP1 and DAB1. Binding to Dab1 inhibits its serine phosphorylation. Interacts with CPEB1. Interacts (via NPXY motif) with DAB2 (via PID domain); the interaction is impaired by tyrosine phosphorylation of the NPXY motif. Interacts (via NPXY motif) with DAB1. In terms of processing, proteolytically cleaved by caspases during neuronal apoptosis. Cleaved, in vitro, at Asp-624 by caspase-3. Post-translationally, N- and O-glycosylated.

The protein resides in the cell membrane. It localises to the cytoplasm. Functionally, may play a role in postsynaptic function. The C-terminal gamma-secretase processed fragment, ALID1, activates transcription activation through APBB1 (Fe65) binding. Couples to JIP signal transduction through C-terminal binding. May interact with cellular G-protein signaling pathways. Can regulate neurite outgrowth through binding to components of the extracellular matrix such as heparin and collagen I. The gamma-CTF peptide, C30, is a potent enhancer of neuronal apoptosis. The sequence is that of Amyloid beta precursor like protein 1 (Aplp1) from Mus musculus (Mouse).